A 247-amino-acid chain; its full sequence is Small ribosomal subunit protein uS2 (247 aa).

This sequence belongs to the universal ribosomal protein uS2 family.

In Pseudomonas syringae pv. syringae (strain B728a), this protein is Small ribosomal subunit protein uS2.